We begin with the raw amino-acid sequence, 244 residues long: Ras-related protein Rab-12 (244 aa).

An N-acetylmethionine modification is found at Met1. Positions 1–10 (MDPGAALQRR) are enriched in low complexity. Residues 1–37 (MDPGAALQRRAGGGGGLGAGSPALSGGQGRRRKQPPR) form a disordered region. 2 positions are modified to phosphoserine: Ser21 and Ser25. Gly52 is a GDP binding site. GTP contacts are provided by Gly52, Val53, Gly54, Lys55, and Thr56. Residues Gly54, Lys55, Thr56, and Ser57 each contribute to the GDP site. Residue Thr56 coordinates Mg(2+). 2 short sequence motifs (switch) span residues 65–79 (DTFC…GVDF) and 97–114 (DTAG…YYRS). 2 residues coordinate GTP: Ser73 and Thr74. 2 residues coordinate Mg(2+): Thr74 and Asp97. A GTP-binding site is contributed by Gly100. At Ser106 the chain carries Phosphoserine; by LRRK2. GDP contacts are provided by Asn155, Lys156, Asp158, and Cys159. GTP contacts are provided by Asn155, Lys156, and Asp158. GTP is bound by residues Ser186, Ala187, and Lys188. GDP-binding residues include Ala187 and Lys188. The tract at residues 225-244 (QPEPEIPPELPPPRPHVRCC) is disordered. Positions 228–238 (PEIPPELPPPR) are enriched in pro residues. 2 S-geranylgeranyl cysteine lipidation sites follow: Cys243 and Cys244.

The protein belongs to the small GTPase superfamily. Rab family. Interacts with RABIF. Interacts with OPTN. Interacts with LRRK2; interaction facilitates phosphorylation of Ser-106. Interacts with GDI1, GDI2, CHM and CHML; these interactions are disrupted by phosphorylation on Ser-106. Interacts with RILPL1 and RILPL2; these interactions are dependent on phosphorylation of Ser-106. It depends on Mg(2+) as a cofactor. In terms of processing, phosphorylation of Ser-106 in the switch II region by LRRK2 prevents the association of RAB regulatory proteins, including CHM, CHML and RAB GDP dissociation inhibitors GDI1 and GDI2.

Its subcellular location is the recycling endosome membrane. It localises to the lysosome membrane. It is found in the golgi apparatus membrane. The protein localises to the cytoplasmic vesicle. The protein resides in the autophagosome. The catalysed reaction is GTP + H2O = GDP + phosphate + H(+). Its activity is regulated as follows. Regulated by guanine nucleotide exchange factors (GEFs) including DENND3 which promote the exchange of bound GDP for free GTP. Regulated by GTPase activating proteins (GAPs) which increase the GTP hydrolysis activity. Inhibited by GDP dissociation inhibitors (GDIs). Functionally, the small GTPases Rab are key regulators of intracellular membrane trafficking, from the formation of transport vesicles to their fusion with membranes. Rabs cycle between an inactive GDP-bound form and an active GTP-bound form that is able to recruit to membranes different sets of downstream effectors directly responsible for vesicle formation, movement, tethering and fusion. RAB12 may play a role in protein transport from recycling endosomes to lysosomes regulating, for instance, the degradation of the transferrin receptor. Involved in autophagy. This Homo sapiens (Human) protein is Ras-related protein Rab-12.